The sequence spans 355 residues: Nicotinate-nucleotide--dimethylbenzimidazole phosphoribosyltransferase (355 aa).

Glu-321 (proton acceptor) is an active-site residue.

This sequence belongs to the CobT family.

The catalysed reaction is 5,6-dimethylbenzimidazole + nicotinate beta-D-ribonucleotide = alpha-ribazole 5'-phosphate + nicotinate + H(+). The protein operates within nucleoside biosynthesis; alpha-ribazole biosynthesis; alpha-ribazole from 5,6-dimethylbenzimidazole: step 1/2. Its function is as follows. Catalyzes the synthesis of alpha-ribazole-5'-phosphate from nicotinate mononucleotide (NAMN) and 5,6-dimethylbenzimidazole (DMB). This Desulfotalea psychrophila (strain LSv54 / DSM 12343) protein is Nicotinate-nucleotide--dimethylbenzimidazole phosphoribosyltransferase.